The following is a 101-amino-acid chain: HssA/B-like protein 40 (101 aa).

The disordered stretch occupies residues 1–26 (MTLFSSISSMSTSMSGSKSSISSFGS).

The protein belongs to the hssA/B family.

The chain is HssA/B-like protein 40 (hssl40) from Dictyostelium discoideum (Social amoeba).